The following is a 210-amino-acid chain: MSALREKLDHLIGQTELEVSEKQRSQLVGYVELLNKWNKAYNLTSVRDPQEMMVKHILDSIIVSTHLQGKRFIDVGTGPGLPGIPLSIMNPDCEFYLLDSLGKRIRFIKQVIHELGIDNVVPIQSRVEEFQPEEKFDAVLSRAFASMTDMVEWCHHLPKEQSGVFLALKGQHPRDEIDLLPEWCSVTDIKALQVPELDGERHLVTLSRQG.

Residues glycine 76, leucine 81, 127–128, and arginine 142 contribute to the S-adenosyl-L-methionine site; that span reads VE.

Belongs to the methyltransferase superfamily. RNA methyltransferase RsmG family.

It localises to the cytoplasm. The catalysed reaction is guanosine(527) in 16S rRNA + S-adenosyl-L-methionine = N(7)-methylguanosine(527) in 16S rRNA + S-adenosyl-L-homocysteine. Functionally, specifically methylates the N7 position of guanine in position 527 of 16S rRNA. The protein is Ribosomal RNA small subunit methyltransferase G of Vibrio atlanticus (strain LGP32) (Vibrio splendidus (strain Mel32)).